The following is a 212-amino-acid chain: NADH-quinone oxidoreductase subunit I (212 aa).

4Fe-4S ferredoxin-type domains lie at R76–D105 and L115–L144. Residues C85, C88, C91, C95, C124, C127, C130, and C134 each coordinate [4Fe-4S] cluster.

Belongs to the complex I 23 kDa subunit family. NDH-1 is composed of 14 different subunits. Subunits NuoA, H, J, K, L, M, N constitute the membrane sector of the complex. [4Fe-4S] cluster is required as a cofactor.

It localises to the cell inner membrane. The enzyme catalyses a quinone + NADH + 5 H(+)(in) = a quinol + NAD(+) + 4 H(+)(out). In terms of biological role, NDH-1 shuttles electrons from NADH, via FMN and iron-sulfur (Fe-S) centers, to quinones in the respiratory chain. The immediate electron acceptor for the enzyme in this species is believed to be ubiquinone. Couples the redox reaction to proton translocation (for every two electrons transferred, four hydrogen ions are translocated across the cytoplasmic membrane), and thus conserves the redox energy in a proton gradient. The sequence is that of NADH-quinone oxidoreductase subunit I from Helicobacter hepaticus (strain ATCC 51449 / 3B1).